Consider the following 333-residue polypeptide: Biotin synthase (333 aa).

In terms of domain architecture, Radical SAM core spans 51–281 (HFGNQVSLCG…DVHITICGGR (231 aa)). C69, C73, and C76 together coordinate [4Fe-4S] cluster. Residue C206 participates in [2Fe-2S] cluster binding.

The protein belongs to the radical SAM superfamily. Biotin synthase family. Homodimer. The cofactor is [4Fe-4S] cluster. Requires [2Fe-2S] cluster as cofactor.

It catalyses the reaction (4R,5S)-dethiobiotin + (sulfur carrier)-SH + 2 reduced [2Fe-2S]-[ferredoxin] + 2 S-adenosyl-L-methionine = (sulfur carrier)-H + biotin + 2 5'-deoxyadenosine + 2 L-methionine + 2 oxidized [2Fe-2S]-[ferredoxin]. It functions in the pathway cofactor biosynthesis; biotin biosynthesis; biotin from 7,8-diaminononanoate: step 2/2. In terms of biological role, catalyzes the conversion of dethiobiotin (DTB) to biotin by the insertion of a sulfur atom into dethiobiotin via a radical-based mechanism. The protein is Biotin synthase of Trichlorobacter lovleyi (strain ATCC BAA-1151 / DSM 17278 / SZ) (Geobacter lovleyi).